We begin with the raw amino-acid sequence, 425 residues long: Serine--tRNA ligase (425 aa).

Position 230-232 (230-232 (TAE)) interacts with L-serine. 261 to 263 (RSE) is a binding site for ATP. Glutamate 284 serves as a coordination point for L-serine. Residue 348 to 351 (EISS) participates in ATP binding. Serine 384 lines the L-serine pocket.

The protein belongs to the class-II aminoacyl-tRNA synthetase family. Type-1 seryl-tRNA synthetase subfamily. As to quaternary structure, homodimer. The tRNA molecule binds across the dimer.

The protein resides in the cytoplasm. The catalysed reaction is tRNA(Ser) + L-serine + ATP = L-seryl-tRNA(Ser) + AMP + diphosphate + H(+). It carries out the reaction tRNA(Sec) + L-serine + ATP = L-seryl-tRNA(Sec) + AMP + diphosphate + H(+). It functions in the pathway aminoacyl-tRNA biosynthesis; selenocysteinyl-tRNA(Sec) biosynthesis; L-seryl-tRNA(Sec) from L-serine and tRNA(Sec): step 1/1. Catalyzes the attachment of serine to tRNA(Ser). Is also able to aminoacylate tRNA(Sec) with serine, to form the misacylated tRNA L-seryl-tRNA(Sec), which will be further converted into selenocysteinyl-tRNA(Sec). This is Serine--tRNA ligase from Streptococcus gordonii (strain Challis / ATCC 35105 / BCRC 15272 / CH1 / DL1 / V288).